Reading from the N-terminus, the 221-residue chain is Large ribosomal subunit protein uL16x (221 aa).

The protein belongs to the universal ribosomal protein uL16 family. As to quaternary structure, component of the small ribosomal subunit. Mature ribosomes consist of a small (40S) and a large (60S) subunit. The 40S subunit contains about 33 different proteins and 1 molecule of RNA (18S). The 60S subunit contains about 49 different proteins and 3 molecules of RNA (25S, 5.8S and 5S).

In Arabidopsis thaliana (Mouse-ear cress), this protein is Large ribosomal subunit protein uL16x (RPL10C).